We begin with the raw amino-acid sequence, 529 residues long: Bifunctional purine biosynthesis protein PurH (529 aa).

Residues 1–148 (MQQRRPVRRA…KNHKDVAIVV (148 aa)) enclose the MGS-like domain. Residue K287 is modified to N6-acetyllysine.

The protein belongs to the PurH family.

It catalyses the reaction (6R)-10-formyltetrahydrofolate + 5-amino-1-(5-phospho-beta-D-ribosyl)imidazole-4-carboxamide = 5-formamido-1-(5-phospho-D-ribosyl)imidazole-4-carboxamide + (6S)-5,6,7,8-tetrahydrofolate. The enzyme catalyses IMP + H2O = 5-formamido-1-(5-phospho-D-ribosyl)imidazole-4-carboxamide. Its pathway is purine metabolism; IMP biosynthesis via de novo pathway; 5-formamido-1-(5-phospho-D-ribosyl)imidazole-4-carboxamide from 5-amino-1-(5-phospho-D-ribosyl)imidazole-4-carboxamide (10-formyl THF route): step 1/1. It functions in the pathway purine metabolism; IMP biosynthesis via de novo pathway; IMP from 5-formamido-1-(5-phospho-D-ribosyl)imidazole-4-carboxamide: step 1/1. The polypeptide is Bifunctional purine biosynthesis protein PurH (Escherichia coli (strain SMS-3-5 / SECEC)).